The primary structure comprises 272 residues: uncharacterized protein (272 aa).

In terms of domain architecture, AB hydrolase-1 spans 20-133 (PVLIFIPGAN…PPINTFLPDS (114 aa)).

Belongs to the AB hydrolase superfamily.

This is an uncharacterized protein from Staphylococcus aureus (strain MSSA476).